The chain runs to 325 residues: Adenine deaminase (325 aa).

Residues His-8, His-10, and His-186 each coordinate Zn(2+). Glu-189 (proton donor) is an active-site residue. Asp-267 is a Zn(2+) binding site. Asp-268 is a substrate binding site.

The protein belongs to the metallo-dependent hydrolases superfamily. Adenosine and AMP deaminases family. Adenine deaminase type 2 subfamily. Requires Zn(2+) as cofactor.

It carries out the reaction adenine + H2O + H(+) = hypoxanthine + NH4(+). Catalyzes the hydrolytic deamination of adenine to hypoxanthine. Plays an important role in the purine salvage pathway and in nitrogen catabolism. The polypeptide is Adenine deaminase (Chelativorans sp. (strain BNC1)).